The chain runs to 254 residues: Leucyl/phenylalanyl-tRNA--protein transferase (254 aa).

This sequence belongs to the L/F-transferase family.

The protein localises to the cytoplasm. It catalyses the reaction N-terminal L-lysyl-[protein] + L-leucyl-tRNA(Leu) = N-terminal L-leucyl-L-lysyl-[protein] + tRNA(Leu) + H(+). The enzyme catalyses N-terminal L-arginyl-[protein] + L-leucyl-tRNA(Leu) = N-terminal L-leucyl-L-arginyl-[protein] + tRNA(Leu) + H(+). The catalysed reaction is L-phenylalanyl-tRNA(Phe) + an N-terminal L-alpha-aminoacyl-[protein] = an N-terminal L-phenylalanyl-L-alpha-aminoacyl-[protein] + tRNA(Phe). Its function is as follows. Functions in the N-end rule pathway of protein degradation where it conjugates Leu, Phe and, less efficiently, Met from aminoacyl-tRNAs to the N-termini of proteins containing an N-terminal arginine or lysine. The protein is Leucyl/phenylalanyl-tRNA--protein transferase of Burkholderia cenocepacia (strain ATCC BAA-245 / DSM 16553 / LMG 16656 / NCTC 13227 / J2315 / CF5610) (Burkholderia cepacia (strain J2315)).